The primary structure comprises 199 residues: Peroxynitrite isomerase (199 aa).

The GXWXGXG signature appears at 20-26 (GVWEGTG). Histidine 190 provides a ligand contact to heme b.

The protein belongs to the nitrobindin family. In terms of assembly, homodimer. It depends on heme b as a cofactor.

It catalyses the reaction peroxynitrite = nitrate. It participates in nitrogen metabolism. Its function is as follows. Heme-binding protein able to scavenge peroxynitrite and to protect free L-tyrosine against peroxynitrite-mediated nitration, by acting as a peroxynitrite isomerase that converts peroxynitrite to nitrate. Therefore, this protein likely plays a role in peroxynitrite sensing and in the detoxification of reactive nitrogen and oxygen species (RNS and ROS, respectively). Is able to bind nitric oxide (NO) in vitro, but may act as a sensor of peroxynitrite levels in vivo. The polypeptide is Peroxynitrite isomerase (Clavibacter michiganensis subsp. michiganensis (strain NCPPB 382)).